We begin with the raw amino-acid sequence, 529 residues long: GMP synthase [glutamine-hydrolyzing] (529 aa).

Residues 17-206 (TILVLDFGSQ…AIDICQASNN (190 aa)) form the Glutamine amidotransferase type-1 domain. Cysteine 93 functions as the Nucleophile in the catalytic mechanism. Active-site residues include histidine 180 and glutamate 182. Residues 207 to 404 (WTMENFIDTE…MGVPHDLVWR (198 aa)) form the GMPS ATP-PPase domain. Residue 235-241 (SGGVDST) coordinates ATP. XMP contacts are provided by arginine 308, aspartate 466, lysine 521, and glutamate 527.

Homodimer. The cofactor is Mg(2+).

Its subcellular location is the cytoplasm. It is found in the cytosol. The enzyme catalyses XMP + L-glutamine + ATP + H2O = GMP + L-glutamate + AMP + diphosphate + 2 H(+). The protein operates within purine metabolism; GMP biosynthesis; GMP from XMP (L-Gln route): step 1/1. Catalyzes the conversion of xanthine monophosphate (XMP) to GMP in the presence of glutamine and ATP through an adenyl-XMP intermediate. In Debaryomyces hansenii (strain ATCC 36239 / CBS 767 / BCRC 21394 / JCM 1990 / NBRC 0083 / IGC 2968) (Yeast), this protein is GMP synthase [glutamine-hydrolyzing] (GUA1).